The sequence spans 154 residues: Large ribosomal subunit protein uL15 (154 aa).

Over residues 1–13 the composition is skewed to basic and acidic residues; the sequence is MKLNELRDHEGAT. Residues 1–44 form a disordered region; it reads MKLNELRDHEGATKNRKRIGRGIGSGTGKTGGCGVKGQKSRSGV. Residues 21-35 are compositionally biased toward gly residues; sequence RGIGSGTGKTGGCGV.

Belongs to the universal ribosomal protein uL15 family. As to quaternary structure, part of the 50S ribosomal subunit.

Functionally, binds to the 23S rRNA. In Bartonella bacilliformis (strain ATCC 35685 / KC583 / Herrer 020/F12,63), this protein is Large ribosomal subunit protein uL15.